Here is a 299-residue protein sequence, read N- to C-terminus: Cold shock protein 1 (299 aa).

The residue at position 2 (Ala2) is an N-acetylalanine. The 65-residue stretch at 12–76 (TGKVNWFNAS…GKTKAVNVTA (65 aa)) folds into the CSD domain. Residues 76 to 97 (APGGGSLKKENNSRGNGARRGG) form a disordered region. 7 CCHC-type zinc fingers span residues 100-117 (SGCY…DCGI), 132-149 (EGCY…DCTS), 164-181 (DGCY…DCTQ), 198-215 (DGCY…DCTQ), 230-247 (GTCY…DCAT), 253-270 (RGCY…DCDQ), and 280-297 (NACY…ECSS).

This sequence belongs to the cold shock protein (CSP) family. Mostly expressed in shoot apices and siliques, and, to a lower extent, in roots, cotyledons, stems, shoots, leaves, floral buds and flowers.

Its subcellular location is the nucleus. The protein resides in the cytoplasm. Its function is as follows. Chaperone that binds to RNA, single- (ssDNA) and double-stranded (dsDNA) DNA, and unwinds nucleic acid duplex. Exhibits a DNA melting activity. May be involved in cold resistance. Prevents seed germination under dehydration or salt stress conditions. This chain is Cold shock protein 1 (CSP1), found in Arabidopsis thaliana (Mouse-ear cress).